A 1897-amino-acid polypeptide reads, in one-letter code: 1,3-beta-glucan synthase component FKS1 (1897 aa).

The segment at 1-106 (MSGYPAGHYE…SETFSDFTMR (106 aa)) is disordered. Over residues 8 to 29 (HYEDGYGHQEHGGDAYYQDEHG) the composition is skewed to basic and acidic residues. The span at 74–83 (GDQYYDQGNG) shows a compositional bias: low complexity. Transmembrane regions (helical) follow at residues 487–507 (IWVI…PTLY), 525–545 (WSAV…ATLC), 564–584 (LMFL…VFGF), 591–611 (TICL…FFFF), 655–675 (LWIC…TLSL), 707–727 (ILLG…SYLW), 728–748 (YVIC…VSIW), 1329–1349 (NMFI…LGAL), 1386–1406 (CVVS…VQEL), 1473–1493 (FAGP…FATS), 1497–1517 (TPAL…PFLF), 1588–1608 (IFFS…VPYL), 1630–1650 (IAIV…MFFG), 1666–1686 (FGAV…LVIF), 1701–1721 (VLGM…IISL), 1766–1786 (FSAD…ALCI), and 1826–1846 (FAIL…APLV).

The protein belongs to the glycosyltransferase 48 family. Component of the 1,3-beta-glucan synthase (GS) complex composed of a catalytic subunit fksA and a regulatory subunit.

The protein localises to the mitochondrion. Its subcellular location is the cell membrane. The enzyme catalyses [(1-&gt;3)-beta-D-glucosyl](n) + UDP-alpha-D-glucose = [(1-&gt;3)-beta-D-glucosyl](n+1) + UDP + H(+). Functionally, catalytic subunit of the 1,3-beta-glucan synthase. Synthesizes 1,3-beta-glucan, a major structural component of the fungal cell wall. Involved in cell wall synthesis, maintenance and remodeling. In Aspergillus niger (strain ATCC MYA-4892 / CBS 513.88 / FGSC A1513), this protein is 1,3-beta-glucan synthase component FKS1.